The primary structure comprises 360 residues: Phospho-N-acetylmuramoyl-pentapeptide-transferase (360 aa).

The next 10 membrane-spanning stretches (helical) occupy residues 16–36 (FAVF…ALVL), 73–93 (TMGG…WADL), 97–117 (YVWV…VDDY), 134–154 (YFWQ…TAST), 168–188 (YSIP…VGSS), 199–219 (GLAI…CYLS), 236–256 (AGEL…FLWF), 263–283 (VFMG…IAVI), 288–308 (IVLF…VIQV), and 338–358 (VIVR…ATLK).

It belongs to the glycosyltransferase 4 family. MraY subfamily. Mg(2+) is required as a cofactor.

It is found in the cell inner membrane. The enzyme catalyses UDP-N-acetyl-alpha-D-muramoyl-L-alanyl-gamma-D-glutamyl-meso-2,6-diaminopimeloyl-D-alanyl-D-alanine + di-trans,octa-cis-undecaprenyl phosphate = di-trans,octa-cis-undecaprenyl diphospho-N-acetyl-alpha-D-muramoyl-L-alanyl-D-glutamyl-meso-2,6-diaminopimeloyl-D-alanyl-D-alanine + UMP. It participates in cell wall biogenesis; peptidoglycan biosynthesis. In terms of biological role, catalyzes the initial step of the lipid cycle reactions in the biosynthesis of the cell wall peptidoglycan: transfers peptidoglycan precursor phospho-MurNAc-pentapeptide from UDP-MurNAc-pentapeptide onto the lipid carrier undecaprenyl phosphate, yielding undecaprenyl-pyrophosphoryl-MurNAc-pentapeptide, known as lipid I. The sequence is that of Phospho-N-acetylmuramoyl-pentapeptide-transferase from Pseudomonas fluorescens (strain Pf0-1).